Here is a 110-residue protein sequence, read N- to C-terminus: Movement protein TGB2 (110 aa).

Over methionine 1 to proline 10 the chain is Cytoplasmic. A helical membrane pass occupies residues threonine 11–threonine 34. Topologically, residues arginine 35–proline 76 are lumenal. Residues phenylalanine 77 to leucine 92 traverse the membrane as a helical segment. Over serine 93–alanine 110 the chain is Cytoplasmic.

Belongs to the Tymovirales TGBp2 protein family.

It is found in the host endoplasmic reticulum membrane. Plays a role in viral cell-to-cell propagation, by facilitating genome transport to neighboring plant cells through plasmosdesmata,. In Plantago asiatica (P1AMV), this protein is Movement protein TGB2.